Reading from the N-terminus, the 251-residue chain is NADPH-dependent oxidoreductase (251 aa).

Belongs to the flavin oxidoreductase frp family. FMN serves as cofactor.

Reduces FMN, organic nitro compounds and disulfide DTNB. Involved in maintenance of the cellular redox state and the disulfide stress response. This Staphylococcus aureus (strain bovine RF122 / ET3-1) protein is NADPH-dependent oxidoreductase (nfrA).